A 312-amino-acid polypeptide reads, in one-letter code: Nucleosome assembly protein 1-like 4 (312 aa).

A coiled-coil region spans residues 24 to 78 (VETLKNKLQALAEQHVDVLESLAPSVRKRVDVLMEIQSQHDELEVKFFEEKAALE). The short motif at 45–60 (LAPSVRKRVDVLMEIQ) is the Nuclear export signal element. A disordered region spans residues 288–312 (EDYGASWVDDEEEDDNDDEYSDEEA).

Belongs to the nucleosome assembly protein (NAP) family.

It is found in the nucleus. Its subcellular location is the cytoplasm. In terms of biological role, may modulate chromatin structure by regulation of nucleosome assembly/disassembly. In Oryza sativa subsp. indica (Rice), this protein is Nucleosome assembly protein 1-like 4.